Reading from the N-terminus, the 222-residue chain is Proteoglycan 3 (222 aa).

Residues 1–17 form the signal peptide; it reads MKQPLILSFLLLGMVSA. Over residues 27 to 46 the composition is skewed to basic and acidic residues; that stretch reads NPKREESLKQEADGSREQGR. The interval 27–100 is disordered; the sequence is NPKREESLKQ…PKEEDTTHFQ (74 aa). Acidic residues predominate over residues 71 to 81; it reads FEDEEAMESDP. Residues 83 to 97 show a composition bias toward basic and acidic residues; sequence ALNKDSACPKEEDTT. The region spanning 105-221 is the C-type lectin domain; sequence CKSCNYVLVR…CKSHLPFICS (117 aa). Disulfide bonds link Cys126–Cys220 and Cys197–Cys212.

As to expression, expressed in bone marrow, spleen, and thymus. Not detected in heart, liver or lung.

In terms of biological role, possesses similar cytotoxic and cytostimulatory activities to PRG2/MBP. This chain is Proteoglycan 3, found in Mus musculus (Mouse).